Here is a 577-residue protein sequence, read N- to C-terminus: Arginine--tRNA ligase (577 aa).

The short motif at Pro122 to His132 is the 'HIGH' region element.

Belongs to the class-I aminoacyl-tRNA synthetase family. As to quaternary structure, monomer.

It localises to the cytoplasm. It catalyses the reaction tRNA(Arg) + L-arginine + ATP = L-arginyl-tRNA(Arg) + AMP + diphosphate. This chain is Arginine--tRNA ligase, found in Shigella dysenteriae serotype 1 (strain Sd197).